The primary structure comprises 321 residues: Ribosomal RNA small subunit methyltransferase H (321 aa).

Residues 42-44, Asp62, Phe86, Asp107, and Gln114 contribute to the S-adenosyl-L-methionine site; that span reads GGH.

This sequence belongs to the methyltransferase superfamily. RsmH family.

It localises to the cytoplasm. It carries out the reaction cytidine(1402) in 16S rRNA + S-adenosyl-L-methionine = N(4)-methylcytidine(1402) in 16S rRNA + S-adenosyl-L-homocysteine + H(+). Functionally, specifically methylates the N4 position of cytidine in position 1402 (C1402) of 16S rRNA. This is Ribosomal RNA small subunit methyltransferase H from Herminiimonas arsenicoxydans.